Here is a 198-residue protein sequence, read N- to C-terminus: Segregation and condensation protein B (198 aa).

The tract at residues proline 167 to glutamate 198 is disordered. A compositionally biased stretch (acidic residues) spans proline 172–glutamate 181.

It belongs to the ScpB family. As to quaternary structure, homodimer. Homodimerization may be required to stabilize the binding of ScpA to the Smc head domains. Component of a cohesin-like complex composed of ScpA, ScpB and the Smc homodimer, in which ScpA and ScpB bind to the head domain of Smc. The presence of the three proteins is required for the association of the complex with DNA.

The protein localises to the cytoplasm. Its function is as follows. Participates in chromosomal partition during cell division. May act via the formation of a condensin-like complex containing Smc and ScpA that pull DNA away from mid-cell into both cell halves. This chain is Segregation and condensation protein B, found in Listeria innocua serovar 6a (strain ATCC BAA-680 / CLIP 11262).